We begin with the raw amino-acid sequence, 180 residues long: Signal peptidase complex subunit 3 (180 aa).

Over 1-12 (MHNLLSRANSLL) the chain is Cytoplasmic. Residues 13-33 (AFTLWVMAAVTAACFLSTVFL) traverse the membrane as a helical; Signal-anchor for type II membrane protein segment. Topologically, residues 34–180 (DYTVSNHLEV…PTTYTTTRRS (147 aa)) are lumenal. A glycan (N-linked (GlcNAc...) asparagine) is linked at asparagine 141.

This sequence belongs to the SPCS3 family. In terms of assembly, component of the signal peptidase complex (SPC) composed of a catalytic subunit sec-11 and three accessory subunits spcs-1, spcs-2 and spcs-3. The complex induces a local thinning of the ER membrane which is used to measure the length of the signal peptide (SP) h-region of protein substrates. This ensures the selectivity of the complex towards h-regions shorter than 18-20 amino acids.

The protein localises to the endoplasmic reticulum membrane. In terms of biological role, essential component of the signal peptidase complex (SPC) which catalyzes the cleavage of N-terminal signal sequences from nascent proteins as they are translocated into the lumen of the endoplasmic reticulum. Essential for the SPC catalytic activity, possibly by stabilizing and positioning the active center of the complex close to the lumenal surface. The protein is Signal peptidase complex subunit 3 of Caenorhabditis briggsae.